The sequence spans 445 residues: Phosphoglucosamine mutase (445 aa).

The active-site Phosphoserine intermediate is serine 102. Serine 102, aspartate 241, aspartate 243, and aspartate 245 together coordinate Mg(2+). A Phosphoserine modification is found at serine 102.

It belongs to the phosphohexose mutase family. It depends on Mg(2+) as a cofactor. Activated by phosphorylation.

The catalysed reaction is alpha-D-glucosamine 1-phosphate = D-glucosamine 6-phosphate. Catalyzes the conversion of glucosamine-6-phosphate to glucosamine-1-phosphate. This chain is Phosphoglucosamine mutase, found in Shewanella halifaxensis (strain HAW-EB4).